The chain runs to 641 residues: 1-phosphatidylinositol 4,5-bisphosphate phosphodiesterase zeta-1 (641 aa).

The EF-hand domain maps to 35–70 (CSYIHVKRIFKDNDRLKQGRITIEEFRAIYRILTHR). Residues 155-299 (QDMTHPLNDY…LKFKVLVKNK (145 aa)) enclose the PI-PLC X-box domain. Residues His-170 and His-215 contribute to the active site. In terms of domain architecture, PI-PLC Y-box spans 382-498 (LSDLVIYTKA…GYILKPHFLR (117 aa)). Residues 498 to 622 (RESESYFNPS…KGYRRVPLFS (125 aa)) form the C2 domain.

Interacts via its C2 domain with PtdIns(3)P and, to a lesser extent, PtdIns(5)P in vitro. The cofactor is Ca(2+).

It is found in the nucleus. The protein localises to the cytoplasm. The protein resides in the perinuclear region. The catalysed reaction is a 1,2-diacyl-sn-glycero-3-phospho-(1D-myo-inositol-4,5-bisphosphate) + H2O = 1D-myo-inositol 1,4,5-trisphosphate + a 1,2-diacyl-sn-glycerol + H(+). Its function is as follows. The production of the second messenger molecules diacylglycerol (DAG) and inositol 1,4,5-trisphosphate (IP3) is mediated by activated phosphatidylinositol-specific phospholipase C enzymes. In vitro, hydrolyzes PtdIns(4,5)P2 in a Ca(2+)-dependent manner. Triggers intracellular Ca(2+) oscillations in oocytes solely during M phase and is involved in inducing oocyte activation and initiating embryonic development up to the blastocyst stage. Is therefore a strong candidate for the egg-activating soluble sperm factor that is transferred from the sperm into the egg cytoplasm following gamete membrane fusion. May exert an inhibitory effect on phospholipase-C-coupled processes that depend on calcium ions and protein kinase C, including CFTR trafficking and function. This is 1-phosphatidylinositol 4,5-bisphosphate phosphodiesterase zeta-1 from Macaca fascicularis (Crab-eating macaque).